A 698-amino-acid chain; its full sequence is Methionine--tRNA ligase (698 aa).

Positions 21–31 match the 'HIGH' region motif; the sequence is PYANGPLHFGH. The Zn(2+) site is built by cysteine 153, cysteine 156, cysteine 166, and cysteine 169. A 'KMSKS' region motif is present at residues 341–345; the sequence is QFSKS. Lysine 344 is an ATP binding site. In terms of domain architecture, tRNA-binding spans 599 to 698; the sequence is DFRKLDLRVG…EDVAPGSLVS (100 aa).

This sequence belongs to the class-I aminoacyl-tRNA synthetase family. MetG type 1 subfamily. As to quaternary structure, homodimer. Requires Zn(2+) as cofactor.

Its subcellular location is the cytoplasm. The enzyme catalyses tRNA(Met) + L-methionine + ATP = L-methionyl-tRNA(Met) + AMP + diphosphate. Is required not only for elongation of protein synthesis but also for the initiation of all mRNA translation through initiator tRNA(fMet) aminoacylation. This Protochlamydia amoebophila (strain UWE25) protein is Methionine--tRNA ligase.